The following is a 314-amino-acid chain: Acetyl-coenzyme A carboxylase carboxyl transferase subunit alpha (314 aa).

Residues 32–289 (EIDMLEASLE…KSAFVAQLDS (258 aa)) enclose the CoA carboxyltransferase C-terminal domain.

It belongs to the AccA family. As to quaternary structure, acetyl-CoA carboxylase is a heterohexamer composed of biotin carboxyl carrier protein (AccB), biotin carboxylase (AccC) and two subunits each of ACCase subunit alpha (AccA) and ACCase subunit beta (AccD).

The protein localises to the cytoplasm. The enzyme catalyses N(6)-carboxybiotinyl-L-lysyl-[protein] + acetyl-CoA = N(6)-biotinyl-L-lysyl-[protein] + malonyl-CoA. It functions in the pathway lipid metabolism; malonyl-CoA biosynthesis; malonyl-CoA from acetyl-CoA: step 1/1. Functionally, component of the acetyl coenzyme A carboxylase (ACC) complex. First, biotin carboxylase catalyzes the carboxylation of biotin on its carrier protein (BCCP) and then the CO(2) group is transferred by the carboxyltransferase to acetyl-CoA to form malonyl-CoA. This chain is Acetyl-coenzyme A carboxylase carboxyl transferase subunit alpha, found in Staphylococcus aureus (strain JH9).